Reading from the N-terminus, the 208-residue chain is Heart- and neural crest derivatives-expressed protein 2 (208 aa).

Disordered stretches follow at residues 79 to 106 (AGAV…TQSI) and 161 to 197 (EFKK…RTGW). Positions 88–103 (TVKRRPTANRKERRRT) are enriched in basic residues. One can recognise a bHLH domain in the interval 90–142 (KRRPTANRKERRRTQSINSAFAELRECIPNVPADTKLSKIKTLRLATSYIAYL). Positions 161–178 (EFKKTDAKEERRKKEMND) are enriched in basic and acidic residues.

Efficient DNA binding requires dimerization with another bHLH protein.

Its subcellular location is the nucleus. Functionally, essential for myocardial and pectoral fin differentiation, patterning and morphogenesis. In Danio rerio (Zebrafish), this protein is Heart- and neural crest derivatives-expressed protein 2 (hand2).